We begin with the raw amino-acid sequence, 715 residues long: Discoidin, CUB and LCCL domain-containing protein 1 (715 aa).

The first 34 residues, 1 to 34, serve as a signal peptide directing secretion; that stretch reads MVPGARGGGALARAAGRGLLALLLAVSAPLRLQA. Residues 35–459 are Extracellular-facing; the sequence is EELGDGCGHL…TSTGINITTV (425 aa). 2 disulfide bridges follow: Cys41/Cys68 and Cys94/Cys112. The 110-residue stretch at 41-150 folds into the CUB domain; that stretch reads CGHLVTYQDS…RGFLLTYASS (110 aa). Residue Asn64 is glycosylated (N-linked (GlcNAc...) asparagine). Asn124 carries an N-linked (GlcNAc...) asparagine glycan. The region spanning 152 to 248 is the LCCL domain; it reads HPDLITCLER…RDGSLSDKRF (97 aa). Intrachain disulfides connect Cys158-Cys174 and Cys178-Cys200. Positions 248–412 constitute an F5/8 type C domain; that stretch reads FLFTSNGCSR…IALKVELIGC (165 aa). N-linked (GlcNAc...) asparagine glycosylation is present at Asn277. Positions 278-312 are disordered; that stretch reads ESGDQVHWSPGQARLQDQGPSWASGDSSNNHKPRE. Polar residues predominate over residues 295 to 307; sequence QGPSWASGDSSNN. N-linked (GlcNAc...) asparagine glycans are attached at residues Asn351, Asn418, and Asn455. A helical membrane pass occupies residues 460–480; it reads AIPLVLLVVLVFAGMGIFAAF. The Cytoplasmic portion of the chain corresponds to 481–715; sequence RKKKKKGSPY…LNQTAMTALL (235 aa). Position 513 is a phosphoserine (Ser513). Thr614 carries the phosphothreonine modification. Residues 619–702 are disordered; it reads SGYRVPGPQP…SDSYSAPRDC (84 aa).

It is found in the membrane. This is Discoidin, CUB and LCCL domain-containing protein 1 (DCBLD1) from Homo sapiens (Human).